Reading from the N-terminus, the 573-residue chain is MHVDTLVKNVRVYNAYTQQFIASDVAIDEGRFVAIGHSDELESIQANTIIDGQGQQMIPGLIDIHLHIESSMVTPETFSWALLRNGVTTIVAEPHEMANVFGIEGIKAMIEASAACTVDMKYAIPSSVPATSLETTGGAIGIAEMDELMDTEDIQCLGEIMNYVDVLSKPDSKTNQILKHFRRSYPALPIEGHVPKLTGLDLHQIVAAGIGSDHTHQTREGMEARIKAGMFLEIQEKSMTDDVLSYLIENDTREHFCFVTDDVMADSLYKRGHLNVLANKALAAGMKFEDVIYACTMAPAKRMKLEDRGAIAPGKIADFILLAEDGQFVFSAVYKDGMLAFDAASPYKQTPKPRQFPPHFYESVKLAPLQEEDFHVVADRQDGIHVCRVMNVADGSTFTKETQERVPVANGLLQWQDSDFRLIATFERYGKTGGRAHGLIAGDILQRGAVATTYSHDNHNLLVVGANILDMVCAANAVIQAQGGCAVVENGEVKAMLELPVGGILSEAPLAELAPKVESFVKALTALGYKHYNPIMSLSTLSLPVSPALKITDFGLIDVNNGQVVPLFVNEKS.

The protein belongs to the metallo-dependent hydrolases superfamily. Adenine deaminase family. The cofactor is Mn(2+).

It catalyses the reaction adenine + H2O + H(+) = hypoxanthine + NH4(+). The polypeptide is Adenine deaminase 2 (Shouchella clausii (strain KSM-K16) (Alkalihalobacillus clausii)).